The primary structure comprises 264 residues: Transmembrane protein 41A (264 aa).

The signal sequence occupies residues methionine 1–alanine 17. A run of 5 helical transmembrane segments spans residues alanine 67 to glycine 87, glycine 100 to leucine 122, leucine 153 to leucine 173, alanine 175 to proline 195, and tryptophan 219 to isoleucine 239. The tract at residues glycine 96–leucine 207 is VTT domain. Asparagine 250 carries an N-linked (GlcNAc...) asparagine glycan.

The protein belongs to the TMEM41 family.

It localises to the membrane. This is Transmembrane protein 41A (TMEM41A) from Homo sapiens (Human).